We begin with the raw amino-acid sequence, 100 residues long: NADH-quinone oxidoreductase subunit K (100 aa).

A run of 3 helical transmembrane segments spans residues 2–22 (ITLTHYLILSAILFSIALVGI), 29–49 (LMLFFATEIALNAVNIALAAF), and 63–83 (FFIIAIAASEVAVGLGLLIIW).

Belongs to the complex I subunit 4L family. NDH-1 is composed of 14 different subunits. Subunits NuoA, H, J, K, L, M, N constitute the membrane sector of the complex.

Its subcellular location is the cell inner membrane. The catalysed reaction is a quinone + NADH + 5 H(+)(in) = a quinol + NAD(+) + 4 H(+)(out). Functionally, NDH-1 shuttles electrons from NADH, via FMN and iron-sulfur (Fe-S) centers, to quinones in the respiratory chain. The immediate electron acceptor for the enzyme in this species is believed to be ubiquinone. Couples the redox reaction to proton translocation (for every two electrons transferred, four hydrogen ions are translocated across the cytoplasmic membrane), and thus conserves the redox energy in a proton gradient. This Nitratiruptor sp. (strain SB155-2) protein is NADH-quinone oxidoreductase subunit K.